Here is a 274-residue protein sequence, read N- to C-terminus: 4-diphosphocytidyl-2-C-methyl-D-erythritol kinase (274 aa).

The active site involves lysine 8. 94–104 is an ATP binding site; that stretch reads PSGAGLGGGSA. The active site involves aspartate 136.

This sequence belongs to the GHMP kinase family. IspE subfamily.

It carries out the reaction 4-CDP-2-C-methyl-D-erythritol + ATP = 4-CDP-2-C-methyl-D-erythritol 2-phosphate + ADP + H(+). Its pathway is isoprenoid biosynthesis; isopentenyl diphosphate biosynthesis via DXP pathway; isopentenyl diphosphate from 1-deoxy-D-xylulose 5-phosphate: step 3/6. Catalyzes the phosphorylation of the position 2 hydroxy group of 4-diphosphocytidyl-2C-methyl-D-erythritol. This chain is 4-diphosphocytidyl-2-C-methyl-D-erythritol kinase, found in Bacteroides fragilis (strain ATCC 25285 / DSM 2151 / CCUG 4856 / JCM 11019 / LMG 10263 / NCTC 9343 / Onslow / VPI 2553 / EN-2).